A 416-amino-acid polypeptide reads, in one-letter code: MAGNLLRGPPLLLRASDKYPRTPKCARCRNHGVVSALKGHKRYCRWKDCMCAKCTLIAERQRVMAAQVALRRQQAQEENEVRELQLLYGTAEGLALAAANGIIPPRPNYEVFGSVSSESNSDSSVQKFETFSKGQLSGPTTPQQAAGKSASAESDSAPGMSSPDGRHGGSGSENGDSESFINSPVSKPLKDGGETPGSVSSIGSDSGSETDKDEQEPSPSSAASRHMNAIDILTRVFPSHKRSILELVLQGCGKDVVQAIEQILNNSGAQGSNKAGPDEGWTAERMLQGAQQPPPPPAASTAPTRPLLPGAMTLSNRSAFSPLQPNTPHFGADPSTYPLGTHLGLNPLRLAYSAHGRGLAFMTPYSTTGLMPTLGFRPPMDYAFSDLIRDRTMLHKEQGYSGGLYGPLVNNTTEKQ.

The DM DNA-binding region spans 25 to 72 (CARCRNHGVVSALKGHKRYCRWKDCMCAKCTLIAERQRVMAAQVALRR). The segment covering 131–154 (FSKGQLSGPTTPQQAAGKSASAES) has biased composition (polar residues). Residues 131–226 (FSKGQLSGPT…PSPSSAASRH (96 aa)) are disordered. Low complexity predominate over residues 197-207 (GSVSSIGSDSG). Positions 227–262 (MNAIDILTRVFPSHKRSILELVLQGCGKDVVQAIEQ) constitute a DMA domain.

This sequence belongs to the DMRT family.

The protein localises to the nucleus. May be involved in sexual development. This chain is Doublesex- and mab-3-related transcription factor A2 (dmrta2), found in Takifugu rubripes (Japanese pufferfish).